A 929-amino-acid chain; its full sequence is Patatin-like phospholipase domain-containing protein CNE02340 (929 aa).

Positions 37–85 (QPLDGDSSPLSPRSFSLPPESPQLSTASVKAPPPTWKYGPDNGTLRSGR) are disordered. The span at 43-54 (SSPLSPRSFSLP) shows a compositional bias: low complexity. Residues 126-146 (WPLLFFIFFIIYLEFSAYVIT) traverse the membrane as a helical segment. The PNPLA domain maps to 301-493 (LCLSGGASFG…REDIPLGSLH (193 aa)). The GXSXG signature appears at 332-336 (GTSAG). Serine 334 serves as the catalytic Nucleophile. Aspartate 480 serves as the catalytic Proton acceptor. Disordered regions lie at residues 644-765 (ALSH…NFGD), 778-806 (LSSP…QRFR), and 818-929 (VSES…QDGA). Polar residues-rich tracts occupy residues 652–664 (NDPA…TNPE) and 745–764 (PTHS…SNFG). The span at 779–806 (SSPFRSIRSNTSSSSNNVQSPSSSQRFR) shows a compositional bias: low complexity. The segment covering 856 to 878 (VESHSDRSEDEMLHSGANVKEEY) has biased composition (basic and acidic residues).

This sequence belongs to the PLPL family.

The protein resides in the membrane. Its function is as follows. Probable lipid hydrolase. The protein is Patatin-like phospholipase domain-containing protein CNE02340 of Cryptococcus neoformans var. neoformans serotype D (strain JEC21 / ATCC MYA-565) (Filobasidiella neoformans).